The following is a 317-amino-acid chain: MTLDHRLFSQTLKRAQPLAASCMPLAEHGPRSPDSDAGCAGNPFTNPLALGKEDGVVEWRLSGSILDVYSGEQGISPVNTGLMNASCPSILPMKKEIAETDTRALAKERQKKDNHNLIERRRRYNINYRIKELGTLIPKSNDPDIRWNKGTILKASVDYIKWLQKEQQRARELEHRQKKLEHANRQLMLRIQELEIQARAHGLPILASLGTADFGTHITKQQTHSEKNSVGCCQQLTPSQGTSPEFYEQAVAFSDPLSHFTDLSFSAALKEEQRLDGMLLSDTICPFGTDPLLSAISPAVSKASSRSSLSSEDGDEL.

A necessary for transcriptional transactivation region spans residues 1–90; that stretch reads MTLDHRLFSQ…GLMNASCPSI (90 aa). A bHLH domain is found at 110–163; that stretch reads QKKDNHNLIERRRRYNINYRIKELGTLIPKSNDPDIRWNKGTILKASVDYIKWL. A necessary for transcriptional transactivation region spans residues 242-317; sequence TSPEFYEQAV…SLSSEDGDEL (76 aa).

Belongs to the MiT/TFE family. As to quaternary structure, homodimer. Forms heterodimers with TFE3. Forms heterodimers with MITF. Interacts with MITF. Expressed in kidney, spleen, lung, liver, testis and muscle.

It localises to the nucleus. Its function is as follows. Transcriptional regulator that acts as a repressor or an activator. Acts as a transcriptional repressor on minimal promoter containing mu E3 enhancer sequence. Binds to mu E3 DNA sequence of the immunoglobulin heavy-chain gene enhancer. Acts as a transcriptional transactivator on the proximal promoter region of the tartrate-resistant acid phosphatase (TRAP) E-box containing promoter. Collaborates with MITF in target gene activation. Acts as a transcriptional repressor on minimal promoter containing mu E3 enhancer sequence. Binds to mu E3 DNA sequence of the immunoglobulin heavy-chain gene enhancer. Binds DNA in a homo- or heterodimeric form. The protein is Transcription factor EC (Tfec) of Rattus norvegicus (Rat).